We begin with the raw amino-acid sequence, 1163 residues long: Genome polyprotein (1163 aa).

Topologically, residues M1–E104 are cytoplasmic. The segment at P38–L72 is hydrophobic; homodimerization of capsid protein C. The propeptide at S102 to G121 is ER anchor for the capsid protein C, removed in mature form by serine protease NS3. Residues V105–V125 form a helical membrane-spanning segment. The Extracellular portion of the chain corresponds to R126–R244. N-linked (GlcNAc...) asparagine; by host glycosylation is found at N134 and N150. Residues W245–S265 traverse the membrane as a helical segment. The Cytoplasmic portion of the chain corresponds to N266–R270. Residues V271 to S285 form a helical membrane-spanning segment. At A286–L730 the chain is on the extracellular side. Intrachain disulfides connect C288–C315, C345–C406, C359–C390, C377–C401, C467–C568, and C585–C615. A fusion peptide region spans residues D383–G396. A helical transmembrane segment spans residues F731–I751. The Extracellular segment spans residues N752–T757. The chain crosses the membrane as a helical span at residues M758 to A778. Residues D779–G1163 lie on the Extracellular side of the membrane. Cystine bridges form between C782–C793, C833–C921, C957–C1002, C1058–C1107, C1069–C1091, and C1090–C1094. N-linked (GlcNAc...) asparagine; by host glycosylation is found at N908 and N986.

In terms of assembly, homodimer. Interacts (via N-terminus) with host EXOC1 (via C-terminus); this interaction results in EXOC1 degradation through the proteasome degradation pathway. Forms heterodimers with envelope protein E in the endoplasmic reticulum and Golgi. As to quaternary structure, homodimer; in the endoplasmic reticulum and Golgi. In terms of assembly, homodimer; Homohexamer when secreted. Interacts with envelope protein E. Post-translationally, specific enzymatic cleavages in vivo yield mature proteins. The nascent capsid protein C contains a C-terminal hydrophobic domain that act as a signal sequence for translocation of prM into the lumen of the ER. Mature capsid protein C is cleaved at a site upstream of this hydrophobic domain by NS3. prM is cleaved in post-Golgi vesicles by a host furin, releasing the mature small envelope protein M, and peptide pr. Non-structural protein 2A-alpha, a C-terminally truncated form of non-structural protein 2A, results from partial cleavage by NS3. Specific enzymatic cleavages in vivo yield mature proteins peptide 2K acts as a signal sequence and is removed from the N-terminus of NS4B by the host signal peptidase in the ER lumen. Signal cleavage at the 2K-4B site requires a prior NS3 protease-mediated cleavage at the 4A-2K site. In terms of processing, cleaved in post-Golgi vesicles by a host furin, releasing the mature small envelope protein M, and peptide pr. This cleavage is incomplete as up to 30% of viral particles still carry uncleaved prM. N-glycosylated. Post-translationally, N-glycosylated. The excreted form is glycosylated and this is required for efficient secretion of the protein from infected cells.

The protein resides in the virion. It is found in the host nucleus. Its subcellular location is the host cytoplasm. It localises to the host perinuclear region. The protein localises to the secreted. The protein resides in the virion membrane. It is found in the host endoplasmic reticulum membrane. Functionally, plays a role in virus budding by binding to the cell membrane and gathering the viral RNA into a nucleocapsid that forms the core of a mature virus particle. During virus entry, may induce genome penetration into the host cytoplasm after hemifusion induced by the surface proteins. Can migrate to the cell nucleus where it modulates host functions. Inhibits RNA silencing by interfering with host Dicer. In terms of biological role, prevents premature fusion activity of envelope proteins in trans-Golgi by binding to envelope protein E at pH6.0. After virion release in extracellular space, gets dissociated from E dimers. Its function is as follows. Acts as a chaperone for envelope protein E during intracellular virion assembly by masking and inactivating envelope protein E fusion peptide. prM is the only viral peptide matured by host furin in the trans-Golgi network probably to avoid catastrophic activation of the viral fusion activity in acidic Golgi compartment prior to virion release. prM-E cleavage is inefficient, and many virions are only partially matured. These uncleaved prM would play a role in immune evasion. Functionally, may play a role in virus budding. Exerts cytotoxic effects by activating a mitochondrial apoptotic pathway through M ectodomain. May display a viroporin activity. Binds to host cell surface receptor and mediates fusion between viral and cellular membranes. Envelope protein is synthesized in the endoplasmic reticulum in the form of heterodimer with protein prM. They play a role in virion budding in the ER, and the newly formed immature particle is covered with 60 spikes composed of heterodimer between precursor prM and envelope protein E. The virion is transported to the Golgi apparatus where the low pH causes dissociation of PrM-E heterodimers and formation of E homodimers. prM-E cleavage is inefficient, and many virions are only partially matured. These uncleaved prM would play a role in immune evasion. In terms of biological role, involved in immune evasion, pathogenesis and viral replication. Once cleaved off the polyprotein, is targeted to three destinations: the viral replication cycle, the plasma membrane and the extracellular compartment. Essential for viral replication. Required for formation of the replication complex and recruitment of other non-structural proteins to the ER-derived membrane structures. Excreted as a hexameric lipoparticle that plays a role against host immune response. Antagonizing the complement function. Binds to the host macrophages and dendritic cells. Inhibits signal transduction originating from Toll-like receptor 3 (TLR3). Its function is as follows. Component of the viral RNA replication complex that functions in virion assembly and antagonizes the host immune response. The protein is Genome polyprotein of Aedes aegypti (Yellowfever mosquito).